We begin with the raw amino-acid sequence, 308 residues long: Protein translocase subunit SecF (308 aa).

Helical transmembrane passes span 10–30 (LFFA…AIFG), 129–149 (LAVS…FRGV), 160–180 (IIAM…GGVL), 181–201 (FGWQ…GFSV), 241–261 (TQLM…GITL), and 264–284 (FAII…FIAA).

Belongs to the SecD/SecF family. SecF subfamily. Forms a complex with SecD. Part of the essential Sec protein translocation apparatus which comprises SecA, SecYEG and auxiliary proteins SecDF. Other proteins may also be involved.

The protein localises to the cell membrane. Functionally, part of the Sec protein translocase complex. Interacts with the SecYEG preprotein conducting channel. SecDF uses the proton motive force (PMF) to complete protein translocation after the ATP-dependent function of SecA. This is Protein translocase subunit SecF from Anaerolinea thermophila (strain DSM 14523 / JCM 11388 / NBRC 100420 / UNI-1).